The chain runs to 264 residues: MDIVHIIVLSLVQGITEFLPISSSAHLVLVPKLLGWPDQGLAFDVAVHIGTLTAIVFYFKDSIFGLLRDFFVSIVRRERVGDSTLVWAVCFATIPAGIFGLAFNSLIEEYTRSGIVIAVTTIIFGVVLYLADKRVGTKSEYDVTIKLALIIGLAQALALIPGVSRSGITMSAALFLGFSRVGSANFSFLMSIPIILLAGGLESVKLIRHDISYVWSDLALAALISAVSAYICVKLFMSIISKMSMTPFVVYRLILGVFLLFIFV.

The next 8 membrane-spanning stretches (helical) occupy residues 1 to 21, 39 to 59, 83 to 103, 113 to 133, 143 to 163, 181 to 201, 220 to 240, and 244 to 264; these read MDIV…FLPI, QGLA…VFYF, STLV…GLAF, SGIV…LADK, VTIK…IPGV, VGSA…AGGL, LAAL…MSII, and SMTP…FIFV.

Belongs to the UppP family.

Its subcellular location is the cell inner membrane. The catalysed reaction is di-trans,octa-cis-undecaprenyl diphosphate + H2O = di-trans,octa-cis-undecaprenyl phosphate + phosphate + H(+). Catalyzes the dephosphorylation of undecaprenyl diphosphate (UPP). Confers resistance to bacitracin. The chain is Undecaprenyl-diphosphatase from Campylobacter curvus (strain 525.92).